The following is a 201-amino-acid chain: Ras-related protein Rab-9A (201 aa).

Position 2 is an N-acetylalanine (A2). 10 residues coordinate GTP: G17, V18, G19, K20, S21, S22, D33, S34, H38, and T39. S21 is a binding site for Mg(2+). A Switch 1 motif is present at residues 31–42 (KFDSQLFHTIGV). S34 carries the phosphoserine modification. Mg(2+) is bound by residues T39 and D62. Positions 64-78 (AGQERFRSLRTPFYR) match the Switch 2 motif. 6 residues coordinate GTP: G65, N124, K125, D127, A155, and K156. S179 bears the Phosphoserine mark. T187 is subject to Phosphothreonine. Residues C200 and C201 are each lipidated (S-geranylgeranyl cysteine).

It belongs to the small GTPase superfamily. Rab family. Interacts (preferentially in its GTP-bound form) with GCC2 (via its GRIP domain). Interacts (GTP-bound form) with SGSM1; the GDP-bound form has much lower affinity for SGSM1. Interacts with SGSM2. The GTP-bound form but not the GDP-bound form interacts with HPS4. The GTP-bound form but not the GDP-bound form interacts with BLOC-3 complex (heterodimer of HPS1 and HPS4) but does not interact with HPS1 alone. Interacts (GTP-bound form) with NDE1; two RAB9A-GTP molecules lie on the opposite sides of the NDE1 homodimer; the interaction leads to RAB9A-dynein motor tethering. Interacts (GTP-bound form) with NDEL1. Mg(2+) serves as cofactor.

It localises to the cell membrane. The protein resides in the endoplasmic reticulum membrane. It is found in the golgi apparatus membrane. Its subcellular location is the late endosome. The protein localises to the cytoplasmic vesicle. It localises to the phagosome membrane. The protein resides in the phagosome. It is found in the cytoplasmic vesicle membrane. Its subcellular location is the melanosome. It catalyses the reaction GTP + H2O = GDP + phosphate + H(+). With respect to regulation, regulated by guanine nucleotide exchange factors (GEFs) which promote the exchange of bound GDP for free GTP. Regulated by GTPase activating proteins (GAPs) which increase the GTP hydrolysis activity. Inhibited by GDP dissociation inhibitors (GDIs). The small GTPases Rab are key regulators of intracellular membrane trafficking, from the formation of transport vesicles to their fusion with membranes. Rabs cycle between an inactive GDP-bound form and an active GTP-bound form that is able to recruit to membranes different sets of downstream effectors directly responsible for vesicle formation, movement, tethering and fusion. RAB9A is involved in the transport of proteins between the endosomes and the trans-Golgi network (TGN). Specifically uses NDE1/NDEL1 as an effector to interact with the dynein motor complex in order to control retrograde trafficking of RAB9-associated late endosomes to the TGN. Involved in the recruitment of SGSM2 to melanosomes and is required for the proper trafficking of melanogenic enzymes TYR, TYRP1 and DCT/TYRP2 to melanosomes in melanocytes. The polypeptide is Ras-related protein Rab-9A (Mus musculus (Mouse)).